Consider the following 239-residue polypeptide: ATP synthase subunit a (239 aa).

5 helical membrane passes run 27-47, 86-106, 125-145, 190-210, and 211-231; these read GQVFLSSWIVIGALLAVVVLG, LPFIGTLFLFIFVSNWGGALI, INTTVAMALLVSLAFFYAGLS, LAVAVLASLVPLLVPLPVMLL, and GLFTSAIQALIFATLAAFYIG.

It belongs to the ATPase A chain family. As to quaternary structure, F-type ATPases have 2 components, CF(1) - the catalytic core - and CF(0) - the membrane proton channel. CF(1) has five subunits: alpha(3), beta(3), gamma(1), delta(1), epsilon(1). CF(0) has four main subunits: a, b, b' and c.

It localises to the cellular thylakoid membrane. In terms of biological role, key component of the proton channel; it plays a direct role in the translocation of protons across the membrane. This Synechococcus sp. (strain RCC307) protein is ATP synthase subunit a.